Reading from the N-terminus, the 378-residue chain is Rhodopsin (378 aa).

The Extracellular segment spans residues Met1 to Trp53. Asn24 is a glycosylation site (N-linked (GlcNAc...) asparagine). Residues His54–Ile78 traverse the membrane as a helical segment. The Cytoplasmic portion of the chain corresponds to Phe79–Asn90. A helical transmembrane segment spans residues Leu91 to Cys115. The Extracellular portion of the chain corresponds to Tyr116–Tyr130. Residues Cys127 and Cys204 are joined by a disulfide bond. A helical membrane pass occupies residues Gly131 to Phe150. Residues Asp151 to Gly169 are Cytoplasmic-facing. The chain crosses the membrane as a helical span at residues Ala170–Asn193. Residues Arg194 to Ser217 lie on the Extracellular side of the membrane. N-linked (GlcNAc...) asparagine glycosylation occurs at Asn200. A helical membrane pass occupies residues Tyr218 to Val245. Residues Ala246–Lys280 lie on the Cytoplasmic side of the membrane. The helical transmembrane segment at Val281–Ile304 threads the bilayer. The Extracellular segment spans residues Phe305–Ser311. The chain crosses the membrane as a helical span at residues Pro312–Ser336. Lys323 carries the post-translational modification N6-(retinylidene)lysine. At His337 to Ala378 the chain is on the cytoplasmic side.

Belongs to the G-protein coupled receptor 1 family. Opsin subfamily. In terms of processing, phosphorylated on some or all of the serine and threonine residues present in the C-terminal region.

The protein resides in the membrane. Its function is as follows. Visual pigments are the light-absorbing molecules that mediate vision. They consist of an apoprotein, opsin, covalently linked to cis-retinal. This is Rhodopsin from Camponotus atriceps (Florida carpenter ant).